Consider the following 37-residue polypeptide: Large ribosomal subunit protein bL36c (37 aa).

It belongs to the bacterial ribosomal protein bL36 family.

It is found in the plastid. The chain is Large ribosomal subunit protein bL36c (rpl36) from Euglena longa (Euglenophycean alga).